The primary structure comprises 166 residues: Ribosome-binding factor A (166 aa).

The segment at 119–166 (VQAQAKSGVYAGDEDPYVKPRVIGEDEDEDDEDGDDIDRSAPGYEPAH) is disordered. The span at 143–154 (EDEDEDDEDGDD) shows a compositional bias: acidic residues.

The protein belongs to the RbfA family. Monomer. Binds 30S ribosomal subunits, but not 50S ribosomal subunits or 70S ribosomes.

It is found in the cytoplasm. One of several proteins that assist in the late maturation steps of the functional core of the 30S ribosomal subunit. Associates with free 30S ribosomal subunits (but not with 30S subunits that are part of 70S ribosomes or polysomes). Required for efficient processing of 16S rRNA. May interact with the 5'-terminal helix region of 16S rRNA. The chain is Ribosome-binding factor A from Clavibacter michiganensis subsp. michiganensis (strain NCPPB 382).